Here is a 266-residue protein sequence, read N- to C-terminus: Undecaprenyl-diphosphatase (266 aa).

Helical transmembrane passes span 1–21 (MDTFQVIILALIQGLTEFLPI), 39–59 (QGLSFDVAVNTGSLLAVVMYF), 87–107 (WWIILATIPAVIVGFTAKDFI), 115–135 (AVIATTTIVFGLLLWWADRMF), 144–164 (VGWKKALVIGVAQAMALIPGT), 183–203 (AAARFSFLMSVPVSLGAAILV), 218–238 (ALSLGIIVSFVAAYTCIHLFL), and 246–266 (MTPFVIYRLALGAILCAFMFA).

It belongs to the UppP family.

It localises to the cell inner membrane. It catalyses the reaction di-trans,octa-cis-undecaprenyl diphosphate + H2O = di-trans,octa-cis-undecaprenyl phosphate + phosphate + H(+). Its function is as follows. Catalyzes the dephosphorylation of undecaprenyl diphosphate (UPP). Confers resistance to bacitracin. This chain is Undecaprenyl-diphosphatase, found in Shewanella sediminis (strain HAW-EB3).